The chain runs to 413 residues: Elongation factor 1-alpha (413 aa).

The tr-type G domain occupies 5-211 (KEHINLAFIG…DNLAAPEKPV (207 aa)). The tract at residues 14–21 (GHVDHGKS) is G1. A GTP-binding site is contributed by 14–21 (GHVDHGKS). A Mg(2+)-binding site is contributed by Ser-21. The G2 stretch occupies residues 60–64 (GVTID). Residues 81-84 (DCPG) form a G3 region. GTP is bound by residues 81–85 (DCPGH) and 136–139 (NKID). The segment at 136–139 (NKID) is G4. Residues 175-177 (SAF) form a G5 region.

It belongs to the TRAFAC class translation factor GTPase superfamily. Classic translation factor GTPase family. EF-Tu/EF-1A subfamily.

The protein resides in the cytoplasm. It catalyses the reaction GTP + H2O = GDP + phosphate + H(+). Functionally, GTP hydrolase that promotes the GTP-dependent binding of aminoacyl-tRNA to the A-site of ribosomes during protein biosynthesis. In Methanobrevibacter smithii (strain ATCC 35061 / DSM 861 / OCM 144 / PS), this protein is Elongation factor 1-alpha.